Consider the following 143-residue polypeptide: Photosystem I reaction center subunit IV B, chloroplastic (143 aa).

The N-terminal 51 residues, 1-51 (MASSSMASAASGFMVATPNIATSNTAPRTSMLFFSSSKNNTTTNFPRLVVR), are a transit peptide targeting the chloroplast. Residues 56-75 (AAPPAATATAEGEAPPAKAA) show a composition bias toward low complexity. The segment at 56–86 (AAPPAATATAEGEAPPAKAAKPPPIGPKRGT) is disordered.

Belongs to the PsaE family. In terms of processing, 2 isoforms exists (ratio 1:1). With or without the N-terminal alanine.

It is found in the plastid. The protein localises to the chloroplast thylakoid membrane. In terms of biological role, stabilizes the interaction between PsaC and the PSI core, assists the docking of the ferredoxin to PSI and interacts with ferredoxin-NADP oxidoreductase. In Nicotiana sylvestris (Wood tobacco), this protein is Photosystem I reaction center subunit IV B, chloroplastic (PSAEB).